The primary structure comprises 677 residues: DNA ligase (677 aa).

NAD(+)-binding positions include 34–38, 83–84, and glutamate 117; these read DAEYD and SL. The active-site N6-AMP-lysine intermediate is lysine 119. Arginine 140, glutamate 175, lysine 283, and lysine 307 together coordinate NAD(+). Cysteine 401, cysteine 404, cysteine 419, and cysteine 425 together coordinate Zn(2+). In terms of domain architecture, BRCT spans 594–677; the sequence is SHLSLLHGKT…QYISPNTNEN (84 aa).

The protein belongs to the NAD-dependent DNA ligase family. LigA subfamily. Mg(2+) serves as cofactor. Requires Mn(2+) as cofactor.

It catalyses the reaction NAD(+) + (deoxyribonucleotide)n-3'-hydroxyl + 5'-phospho-(deoxyribonucleotide)m = (deoxyribonucleotide)n+m + AMP + beta-nicotinamide D-nucleotide.. DNA ligase that catalyzes the formation of phosphodiester linkages between 5'-phosphoryl and 3'-hydroxyl groups in double-stranded DNA using NAD as a coenzyme and as the energy source for the reaction. It is essential for DNA replication and repair of damaged DNA. This chain is DNA ligase, found in Ehrlichia canis (strain Jake).